A 337-amino-acid polypeptide reads, in one-letter code: MRVLGIETSCDETGIAIYDDKKGLLANQLYSQVKLHADYGGVVPELASRDHVRKTVPLIQAALKEAGLTASDIDAVAYTAGPGLVGALLVGATVGRSLAFAWNVPAIPVHHMEGHLLAPMLEDNPPEFPFVALLVSGGHTQLISVTGIGQYELLGESIDDAAGEAFDKTAKLLGLDYPGGPMLSKMASQGTAGRFVFPRPMTDRPGLDFSFSGLKTFAANTIRSNGDDEQTRADIARAFEDAVVDTLMIKCKRALESTGFKRLVMAGGVSANRTLRAKLAEMMQKRRGEVFYARPEFCTDNGAMIAYAGMVRFKAGVTADLGVTVRPRWPLAELPAA.

Residues His-111 and His-115 each contribute to the Fe cation site. Residues 134 to 138, Asp-167, Gly-180, and Asn-272 each bind substrate; that span reads LVSGG. A Fe cation-binding site is contributed by Asp-300.

The protein belongs to the KAE1 / TsaD family. It depends on Fe(2+) as a cofactor.

It localises to the cytoplasm. It carries out the reaction L-threonylcarbamoyladenylate + adenosine(37) in tRNA = N(6)-L-threonylcarbamoyladenosine(37) in tRNA + AMP + H(+). In terms of biological role, required for the formation of a threonylcarbamoyl group on adenosine at position 37 (t(6)A37) in tRNAs that read codons beginning with adenine. Is involved in the transfer of the threonylcarbamoyl moiety of threonylcarbamoyl-AMP (TC-AMP) to the N6 group of A37, together with TsaE and TsaB. TsaD likely plays a direct catalytic role in this reaction. This is tRNA N6-adenosine threonylcarbamoyltransferase from Salmonella newport (strain SL254).